The chain runs to 239 residues: Ribonuclease Le2 (239 aa).

5 cysteine pairs are disulfide-bonded: Cys-5–Cys-22, Cys-13–Cys-58, Cys-21–Cys-126, Cys-66–Cys-118, and Cys-191–Cys-225. Residues His-51, Glu-111, and His-115 contribute to the active site.

It belongs to the RNase T2 family.

The enzyme catalyses a ribonucleotidyl-ribonucleotide-RNA + H2O = a 3'-end 3'-phospho-ribonucleotide-RNA + a 5'-end dephospho-ribonucleoside-RNA + H(+). Functionally, this is a base non-specific and adenylic acid preferential ribonuclease. This chain is Ribonuclease Le2, found in Lentinula edodes (Shiitake mushroom).